The following is a 283-amino-acid chain: RNase adapter protein RapZ (283 aa).

Position 8 to 15 (8 to 15 (GRSGSGKS)) interacts with ATP. 56 to 59 (DVRN) serves as a coordination point for GTP. Positions 266-283 (RARGKNVQSRHRTLEKRK) are RNA-binding.

It belongs to the RapZ-like family. RapZ subfamily. In terms of assembly, homotrimer.

In terms of biological role, modulates the synthesis of GlmS, by affecting the processing and stability of the regulatory small RNA GlmZ. When glucosamine-6-phosphate (GlcN6P) concentrations are high in the cell, RapZ binds GlmZ and targets it to cleavage by RNase E. Consequently, GlmZ is inactivated and unable to activate GlmS synthesis. Under low GlcN6P concentrations, RapZ is sequestered and inactivated by an other regulatory small RNA, GlmY, preventing GlmZ degradation and leading to synthesis of GlmS. This is RNase adapter protein RapZ from Yersinia enterocolitica serotype O:8 / biotype 1B (strain NCTC 13174 / 8081).